The chain runs to 143 residues: Large ribosomal subunit protein uL11 (143 aa).

It belongs to the universal ribosomal protein uL11 family. In terms of assembly, part of the ribosomal stalk of the 50S ribosomal subunit. Interacts with L10 and the large rRNA to form the base of the stalk. L10 forms an elongated spine to which L12 dimers bind in a sequential fashion forming a multimeric L10(L12)X complex. In terms of processing, one or more lysine residues are methylated.

Its function is as follows. Forms part of the ribosomal stalk which helps the ribosome interact with GTP-bound translation factors. The sequence is that of Large ribosomal subunit protein uL11 from Novosphingobium aromaticivorans (strain ATCC 700278 / DSM 12444 / CCUG 56034 / CIP 105152 / NBRC 16084 / F199).